The primary structure comprises 290 residues: Energy-coupling factor transporter ATP-binding protein EcfA2 (290 aa).

The ABC transporter domain maps to 6–246 (EKVEHVYNAR…ADKLAAIGLS (241 aa)). 40–47 (GHTGSGKS) serves as a coordination point for ATP.

It belongs to the ABC transporter superfamily. Energy-coupling factor EcfA family. Forms a stable energy-coupling factor (ECF) transporter complex composed of 2 membrane-embedded substrate-binding proteins (S component), 2 ATP-binding proteins (A component) and 2 transmembrane proteins (T component).

It localises to the cell membrane. Its function is as follows. ATP-binding (A) component of a common energy-coupling factor (ECF) ABC-transporter complex. Unlike classic ABC transporters this ECF transporter provides the energy necessary to transport a number of different substrates. The polypeptide is Energy-coupling factor transporter ATP-binding protein EcfA2 (Geobacillus kaustophilus (strain HTA426)).